Here is a 214-residue protein sequence, read N- to C-terminus: Thiamine-phosphate synthase (214 aa).

Residues 37-41 (QYREK) and N73 contribute to the 4-amino-2-methyl-5-(diphosphooxymethyl)pyrimidine site. The Mg(2+) site is built by D74 and D93. S112 provides a ligand contact to 4-amino-2-methyl-5-(diphosphooxymethyl)pyrimidine. Residue 139-141 (TIS) participates in 2-[(2R,5Z)-2-carboxy-4-methylthiazol-5(2H)-ylidene]ethyl phosphate binding. K142 is a 4-amino-2-methyl-5-(diphosphooxymethyl)pyrimidine binding site. 2-[(2R,5Z)-2-carboxy-4-methylthiazol-5(2H)-ylidene]ethyl phosphate-binding positions include G171 and 191–192 (IS).

It belongs to the thiamine-phosphate synthase family. Mg(2+) is required as a cofactor.

The enzyme catalyses 2-[(2R,5Z)-2-carboxy-4-methylthiazol-5(2H)-ylidene]ethyl phosphate + 4-amino-2-methyl-5-(diphosphooxymethyl)pyrimidine + 2 H(+) = thiamine phosphate + CO2 + diphosphate. It carries out the reaction 2-(2-carboxy-4-methylthiazol-5-yl)ethyl phosphate + 4-amino-2-methyl-5-(diphosphooxymethyl)pyrimidine + 2 H(+) = thiamine phosphate + CO2 + diphosphate. It catalyses the reaction 4-methyl-5-(2-phosphooxyethyl)-thiazole + 4-amino-2-methyl-5-(diphosphooxymethyl)pyrimidine + H(+) = thiamine phosphate + diphosphate. It participates in cofactor biosynthesis; thiamine diphosphate biosynthesis; thiamine phosphate from 4-amino-2-methyl-5-diphosphomethylpyrimidine and 4-methyl-5-(2-phosphoethyl)-thiazole: step 1/1. In terms of biological role, condenses 4-methyl-5-(beta-hydroxyethyl)thiazole monophosphate (THZ-P) and 2-methyl-4-amino-5-hydroxymethyl pyrimidine pyrophosphate (HMP-PP) to form thiamine monophosphate (TMP). This is Thiamine-phosphate synthase from Listeria monocytogenes serovar 1/2a (strain ATCC BAA-679 / EGD-e).